We begin with the raw amino-acid sequence, 631 residues long: Dolichyl-diphosphooligosaccharide--protein glycosyltransferase subunit 2 (631 aa).

The first 22 residues, 1–22 (MAPPGSSTVFLLALTIIASTWA), serve as a signal peptide directing secretion. The Lumenal portion of the chain corresponds to 23 to 540 (LTPTHYLTKH…REPEKRPPTV (518 aa)). Asn106 carries an N-linked (GlcNAc...) asparagine glycan. Lys154 participates in a covalent cross-link: Glycyl lysine isopeptide (Lys-Gly) (interchain with G-Cter in ubiquitin). A helical membrane pass occupies residues 541-561 (VSNTFTALILSPLLLLFALWI). Over 562–571 (RIGANVSNFT) the chain is Cytoplasmic. Residues 572–592 (FAPSTIIFHLGHAAMLGLMYV) traverse the membrane as a helical segment. The Lumenal portion of the chain corresponds to 593–596 (YWTQ). A helical membrane pass occupies residues 597-617 (LNMFQTLKYLAILGSVTFLAG). Residues 618–631 (NRMLAQQAVKRTAH) are Cytoplasmic-facing.

The protein belongs to the SWP1 family. As to quaternary structure, component of the oligosaccharyltransferase (OST) complex. OST exists in two different complex forms which contain common core subunits RPN1, RPN2, OST48, OST4, DAD1 and TMEM258, either STT3A or STT3B as catalytic subunits, and form-specific accessory subunits. STT3A complex assembly occurs through the formation of 3 subcomplexes. Subcomplex 1 contains RPN1 and TMEM258, subcomplex 2 contains the STT3A-specific subunits STT3A, DC2/OSTC, and KCP2 as well as the core subunit OST4, and subcomplex 3 contains RPN2, DAD1, and OST48. The STT3A complex can form stable complexes with the Sec61 complex or with both the Sec61 and TRAP complexes. Interacts with DDI2. Interacts with TMEM35A/NACHO. Expressed in all tissues tested.

The protein resides in the endoplasmic reticulum. The protein localises to the endoplasmic reticulum membrane. It functions in the pathway protein modification; protein glycosylation. Subunit of the oligosaccharyl transferase (OST) complex that catalyzes the initial transfer of a defined glycan (Glc(3)Man(9)GlcNAc(2) in eukaryotes) from the lipid carrier dolichol-pyrophosphate to an asparagine residue within an Asn-X-Ser/Thr consensus motif in nascent polypeptide chains, the first step in protein N-glycosylation. N-glycosylation occurs cotranslationally and the complex associates with the Sec61 complex at the channel-forming translocon complex that mediates protein translocation across the endoplasmic reticulum (ER). All subunits are required for a maximal enzyme activity. This Homo sapiens (Human) protein is Dolichyl-diphosphooligosaccharide--protein glycosyltransferase subunit 2.